Reading from the N-terminus, the 727-residue chain is Protein TITANIA (727 aa).

Residues 1–136 are disordered; that stretch reads MFGDSDGSKD…LASLLQPVPA (136 aa). Residues 14–25 show a composition bias toward pro residues; that stretch reads GAPPSTTDPPFP. Basic and acidic residues predominate over residues 67–88; sequence DDGKHCVERDFLHLSAPKRGDP. Over residues 104–117 the composition is skewed to low complexity; sequence DSLQLSLSLNSDGP. The segment at 406–470 adopts a PHD-type zinc-finger fold; it reads ACTCSVCHKF…QFQCLACNHS (65 aa). Positions 629-697 form a coiled coil; the sequence is VKCKEAEAKL…LEELKMLENS (69 aa).

As to expression, widely expressed.

It is found in the nucleus. Functionally, probable transcription factor that functions as a regulator of metal transporter genes responsible for essential metals delivery to shoots and normal plant growth. Required for the maintenance of metal transporter gene expression, such as IRT1, IRT2, ZIP1, ZIP9, NRAMP1 and NRAMP5. The chain is Protein TITANIA from Oryza sativa subsp. japonica (Rice).